A 188-amino-acid chain; its full sequence is MKLVPVALMYLGSLAFLGADTARLDVAAEFRKKWNKWALSRGKRELRLSSSYPTGIADLKAGPAQTVIRPQDVKGSSRSPQASIPDAARIRVKRYRQSMNNFQGLRSFGCRFGTCTVQKLAHQIYQFTDKDKDGVAPRSKISPQGYGRRRRRSLPEASLGRTLRSQEPQAHGAPASPAHQVLATLFRI.

The N-terminal stretch at methionine 1–threonine 21 is a signal peptide. An Arginine amide modification is found at arginine 41. The propeptide occupies glutamate 45–valine 92. A disulfide bond links cysteine 110 and cysteine 115. The disordered stretch occupies residues aspartate 131 to proline 177. Tyrosine 146 is modified (tyrosine amide). Positions serine 153–isoleucine 188 are cleaved as a propeptide — preproAM C-terminal fragment.

Belongs to the adrenomedullin family. Highly expressed in adrenal glands, lung and kidney.

The protein resides in the secreted. In terms of biological role, adrenomedullin/ADM and proadrenomedullin N-20 terminal peptide/PAMP are peptide hormones that act as potent hypotensive and vasodilatator agents. Numerous actions have been reported most related to the physiologic control of fluid and electrolyte homeostasis. ADM function is mediated by the CALCRL-RAMP2 and CALCRL-RAMP3 receptor complexes with ADM showing the highest potency for the CALCRL-RAMP2 complex. In Sus scrofa (Pig), this protein is Pro-adrenomedullin (ADM).